The following is an 87-amino-acid chain: Putative regulatory protein BH2513 (87 aa).

It belongs to the RemA family.

This chain is Putative regulatory protein BH2513, found in Halalkalibacterium halodurans (strain ATCC BAA-125 / DSM 18197 / FERM 7344 / JCM 9153 / C-125) (Bacillus halodurans).